The sequence spans 197 residues: MKFVVFASLLASAARFAPAQQSARTSVATNMAFENELGAQPPLGFFDPLGLVADGDQEKFDRLRYVEIKHGRISMLAVAGYLVQENGIRLPGDIDYSGTSFESIPNGFAALTTISGAGIAQIVAFIGFLELAVMKDITGGEFVGDFRNDFIDFGWDSFDEETKMQKRAIELNQGRAAQMGILALMVHEQLGVSLIPN.

Residues 1-31 (MKFVVFASLLASAARFAPAQQSARTSVATNM) constitute a chloroplast transit peptide. A run of 3 helical transmembrane segments spans residues 73–94 (ISML…PGDI), 114–134 (ISGA…LAVM), and 174–196 (GRAA…SLIP).

Belongs to the fucoxanthin chlorophyll protein family. In terms of assembly, the LHC complex of chromophytic algae is composed of fucoxanthin, chlorophyll A and C bound non-covalently by fucoxanthin chlorophyll proteins (FCPs). The ratio of the pigments in LHC; fucoxanthin: chlorophyll C: chlorophyll A; (0.6-1): (0.1-0.3): (1).

The protein localises to the plastid. The protein resides in the chloroplast thylakoid membrane. Its function is as follows. The light-harvesting complex (LHC) functions as a light receptor, it captures and delivers excitation energy to photosystems with which it is closely associated. Energy is transferred from the carotenoid and chlorophyll C (or B) to chlorophyll A and the photosynthetic reaction centers where it is used to synthesize ATP and reducing power. This is Fucoxanthin-chlorophyll a-c binding protein E, chloroplastic (FCPE) from Phaeodactylum tricornutum (Diatom).